Consider the following 443-residue polypeptide: UDP-N-acetylmuramate--L-alanine ligase (443 aa).

Residue 110–116 (GAHGKTS) coordinates ATP.

It belongs to the MurCDEF family.

It is found in the cytoplasm. It catalyses the reaction UDP-N-acetyl-alpha-D-muramate + L-alanine + ATP = UDP-N-acetyl-alpha-D-muramoyl-L-alanine + ADP + phosphate + H(+). It functions in the pathway cell wall biogenesis; peptidoglycan biosynthesis. Its function is as follows. Cell wall formation. This chain is UDP-N-acetylmuramate--L-alanine ligase, found in Lactococcus lactis subsp. cremoris (strain SK11).